The primary structure comprises 181 residues: ATP synthase subunit b 2 (181 aa).

Residues 1–12 (MAEGHGTTAHTG) show a composition bias toward low complexity. The segment at 1–20 (MAEGHGTTAHTGAEGGHKAP) is disordered. The helical transmembrane segment at 33-53 (LVSLLIAFVALYLIVSKVALP) threads the bilayer.

It belongs to the ATPase B chain family. F-type ATPases have 2 components, F(1) - the catalytic core - and F(0) - the membrane proton channel. F(1) has five subunits: alpha(3), beta(3), gamma(1), delta(1), epsilon(1). F(0) has three main subunits: a(1), b(2) and c(10-14). The alpha and beta chains form an alternating ring which encloses part of the gamma chain. F(1) is attached to F(0) by a central stalk formed by the gamma and epsilon chains, while a peripheral stalk is formed by the delta and b chains.

The protein localises to the cell inner membrane. In terms of biological role, f(1)F(0) ATP synthase produces ATP from ADP in the presence of a proton or sodium gradient. F-type ATPases consist of two structural domains, F(1) containing the extramembraneous catalytic core and F(0) containing the membrane proton channel, linked together by a central stalk and a peripheral stalk. During catalysis, ATP synthesis in the catalytic domain of F(1) is coupled via a rotary mechanism of the central stalk subunits to proton translocation. Functionally, component of the F(0) channel, it forms part of the peripheral stalk, linking F(1) to F(0). The b'-subunit is a diverged and duplicated form of b found in plants and photosynthetic bacteria. In Rhodopseudomonas palustris (strain BisA53), this protein is ATP synthase subunit b 2 (atpF2).